The sequence spans 216 residues: Probable transaldolase (216 aa).

The active-site Schiff-base intermediate with substrate is the Lys85.

The protein belongs to the transaldolase family. Type 3B subfamily.

The protein localises to the cytoplasm. It catalyses the reaction D-sedoheptulose 7-phosphate + D-glyceraldehyde 3-phosphate = D-erythrose 4-phosphate + beta-D-fructose 6-phosphate. It functions in the pathway carbohydrate degradation; pentose phosphate pathway; D-glyceraldehyde 3-phosphate and beta-D-fructose 6-phosphate from D-ribose 5-phosphate and D-xylulose 5-phosphate (non-oxidative stage): step 2/3. In terms of biological role, transaldolase is important for the balance of metabolites in the pentose-phosphate pathway. The sequence is that of Probable transaldolase from Dehalococcoides mccartyi (strain ATCC BAA-2266 / KCTC 15142 / 195) (Dehalococcoides ethenogenes (strain 195)).